The primary structure comprises 358 residues: UDP-N-acetylglucosamine--N-acetylmuramyl-(pentapeptide) pyrophosphoryl-undecaprenol N-acetylglucosamine transferase (358 aa).

UDP-N-acetyl-alpha-D-glucosamine contacts are provided by residues 12-14 (TGG), asparagine 124, arginine 162, serine 185, isoleucine 242, 261-266 (ALTVSE), and glutamine 287.

The protein belongs to the glycosyltransferase 28 family. MurG subfamily.

It is found in the cell inner membrane. The enzyme catalyses di-trans,octa-cis-undecaprenyl diphospho-N-acetyl-alpha-D-muramoyl-L-alanyl-D-glutamyl-meso-2,6-diaminopimeloyl-D-alanyl-D-alanine + UDP-N-acetyl-alpha-D-glucosamine = di-trans,octa-cis-undecaprenyl diphospho-[N-acetyl-alpha-D-glucosaminyl-(1-&gt;4)]-N-acetyl-alpha-D-muramoyl-L-alanyl-D-glutamyl-meso-2,6-diaminopimeloyl-D-alanyl-D-alanine + UDP + H(+). It participates in cell wall biogenesis; peptidoglycan biosynthesis. In terms of biological role, cell wall formation. Catalyzes the transfer of a GlcNAc subunit on undecaprenyl-pyrophosphoryl-MurNAc-pentapeptide (lipid intermediate I) to form undecaprenyl-pyrophosphoryl-MurNAc-(pentapeptide)GlcNAc (lipid intermediate II). In Pseudoalteromonas translucida (strain TAC 125), this protein is UDP-N-acetylglucosamine--N-acetylmuramyl-(pentapeptide) pyrophosphoryl-undecaprenol N-acetylglucosamine transferase.